A 238-amino-acid chain; its full sequence is MKVNKFITIYKDIAQQIEGGRWKAEEILPSEHELTAQYGTSRETVRKALHMLAQNGYIQKIRGKGSVVLNREKMQFPVSGLVSFKELAQTLGKETKTTVHKFGLEPPSELIQKQLRANLDDDIWEVIRSRKIDGEHVILDKDYFFRKHVPHLTKEICENSIYEYIEGELGLSISYAQKEIVAEPCTDEDRELLDLRGYDHMVVVRNYVFLEDTSLFQYTESRHRLDKFRFVDFARRGK.

The 71-residue stretch at 1 to 71 (MKVNKFITIY…RGKGSVVLNR (71 aa)) folds into the HTH gntR-type domain. The segment at residues 31-50 (EHELTAQYGTSRETVRKALH) is a DNA-binding region (H-T-H motif).

Dimer of dimers.

In terms of biological role, repressor for the trePA operon. It is able to bind trehalose-6-phosphate. The sequence is that of HTH-type transcriptional regulator TreR (treR) from Bacillus subtilis (strain 168).